A 238-amino-acid chain; its full sequence is Thiamine import ATP-binding protein ThiQ (238 aa).

In terms of domain architecture, ABC transporter spans 2-230 (LALDKVRYEY…HPHPELAQFV (229 aa)). ATP is bound at residue 32–39 (GPSGAGKS).

This sequence belongs to the ABC transporter superfamily. Thiamine importer (TC 3.A.1.19.1) family. In terms of assembly, the complex is composed of two ATP-binding proteins (ThiQ), two transmembrane proteins (ThiP) and a solute-binding protein (ThiB).

It localises to the cell inner membrane. The enzyme catalyses thiamine(out) + ATP + H2O = thiamine(in) + ADP + phosphate + H(+). Part of the ABC transporter complex ThiBPQ involved in thiamine import. Responsible for energy coupling to the transport system. This chain is Thiamine import ATP-binding protein ThiQ, found in Vibrio cholerae serotype O1 (strain ATCC 39315 / El Tor Inaba N16961).